The primary structure comprises 498 residues: Protein disulfide-isomerase (498 aa).

The first 23 residues, 1–23, serve as a signal peptide directing secretion; it reads MASFRGSIWYCIFVLSLIAVAIS. Thioredoxin domains lie at 24–143 and 339–484; these read AAES…KQSG and YLKA…KNRD. N-linked (GlcNAc...) asparagine glycosylation is present at Asn-41. Residues Cys-61, Cys-64, Cys-406, and Cys-409 each act as nucleophile in the active site. Disulfide bonds link Cys-61–Cys-64 and Cys-406–Cys-409. Positions 495-498 match the Prevents secretion from ER motif; it reads KDEL.

This sequence belongs to the protein disulfide isomerase family.

The protein resides in the endoplasmic reticulum lumen. The enzyme catalyses Catalyzes the rearrangement of -S-S- bonds in proteins.. Functionally, participates in the folding of proteins containing disulfide bonds, may be involved in glycosylation, prolyl hydroxylation and triglyceride transfer. The sequence is that of Protein disulfide-isomerase from Ricinus communis (Castor bean).